A 523-amino-acid chain; its full sequence is Cilia- and flagella-associated protein 157 (523 aa).

The disordered stretch occupies residues 1–31 (MAPKKKPNKGGKEMQGKKIGGKKDASGTKTP). Positions 10-26 (GGKEMQGKKIGGKKDAS) are enriched in basic and acidic residues. Position 30 is a phosphothreonine (Thr30). Coiled coils occupy residues 32–191 (ELAM…LEKK), 248–274 (VQLL…LENT), and 302–371 (GTEE…VLIQ). A disordered region spans residues 419-440 (QPDMGSHQDKQPQGLSKESQRI). Positions 429–440 (QPQGLSKESQRI) are enriched in polar residues.

The protein belongs to the CFAP157 family. Interacts with TUBB and TUBA4A. Interacts with CEP350. In terms of tissue distribution, specifically expressed in tissues containing motile cilia.

It is found in the cytoplasm. Its subcellular location is the cytoskeleton. The protein localises to the cilium basal body. Specifically required during spermatogenesis for flagellum morphogenesis and sperm motility. May be required to suppress the formation of supernumerary axonemes and ensure a correct ultrastructure. The chain is Cilia- and flagella-associated protein 157 from Mus musculus (Mouse).